Consider the following 414-residue polypeptide: Glucose-1-phosphate adenylyltransferase (414 aa).

Residues Y103, G168, 183 to 184 (EK), and S201 each bind alpha-D-glucose 1-phosphate.

The protein belongs to the bacterial/plant glucose-1-phosphate adenylyltransferase family. In terms of assembly, homotetramer.

It carries out the reaction alpha-D-glucose 1-phosphate + ATP + H(+) = ADP-alpha-D-glucose + diphosphate. It functions in the pathway glycan biosynthesis; glycogen biosynthesis. Involved in the biosynthesis of ADP-glucose, a building block required for the elongation reactions to produce glycogen. Catalyzes the reaction between ATP and alpha-D-glucose 1-phosphate (G1P) to produce pyrophosphate and ADP-Glc. The polypeptide is Glucose-1-phosphate adenylyltransferase (Thermus caldophilus).